A 344-amino-acid polypeptide reads, in one-letter code: D-beta-hydroxybutyrate dehydrogenase, mitochondrial (344 aa).

Residues 1 to 46 constitute a mitochondrion transit peptide; it reads MLTARLSRPLSQLPRKTLNFSDRENGTRGSLLLYSAPFVPVGRRTY. An NAD(+)-binding site is contributed by 59-83; the sequence is LITGCDSGFGFSLAKHLHSEGFLVF. An N6-acetyllysine mark is found at lysine 73 and lysine 97. Lysine 103 bears the N6-acetyllysine; alternate mark. The residue at position 103 (lysine 103) is an N6-succinyllysine; alternate. At lysine 177 the chain carries N6-acetyllysine. Serine 195 contributes to the substrate binding site. Tyrosine 208 (proton acceptor) is an active-site residue. Lysine 212 bears the N6-acetyllysine mark. Residue serine 219 is glycosylated (O-linked (GlcNAc) serine). Position 246 is a phosphoserine (serine 246). Lysine 260 bears the N6-acetyllysine; alternate mark. Lysine 260 is subject to N6-succinyllysine; alternate. Lysine 281 is subject to N6-acetyllysine.

This sequence belongs to the short-chain dehydrogenases/reductases (SDR) family. In terms of assembly, homotetramer.

It localises to the mitochondrion inner membrane. Its subcellular location is the mitochondrion matrix. It carries out the reaction (R)-3-hydroxybutanoate + NAD(+) = acetoacetate + NADH + H(+). With respect to regulation, requires phosphatidylcholine as an allosteric activator for enzymatic activity. In Bos taurus (Bovine), this protein is D-beta-hydroxybutyrate dehydrogenase, mitochondrial.